A 302-amino-acid chain; its full sequence is 4-hydroxy-tetrahydrodipicolinate synthase (302 aa).

T55 contributes to the pyruvate binding site. The active-site Proton donor/acceptor is Y144. K172 acts as the Schiff-base intermediate with substrate in catalysis. V214 contributes to the pyruvate binding site.

This sequence belongs to the DapA family. As to quaternary structure, homotetramer; dimer of dimers.

The protein localises to the cytoplasm. It catalyses the reaction L-aspartate 4-semialdehyde + pyruvate = (2S,4S)-4-hydroxy-2,3,4,5-tetrahydrodipicolinate + H2O + H(+). The protein operates within amino-acid biosynthesis; L-lysine biosynthesis via DAP pathway; (S)-tetrahydrodipicolinate from L-aspartate: step 3/4. Functionally, catalyzes the condensation of (S)-aspartate-beta-semialdehyde [(S)-ASA] and pyruvate to 4-hydroxy-tetrahydrodipicolinate (HTPA). The protein is 4-hydroxy-tetrahydrodipicolinate synthase of Synechococcus sp. (strain CC9605).